The following is a 351-amino-acid chain: UDP-3-O-acylglucosamine N-acyltransferase (351 aa).

The Proton acceptor role is filled by His257.

This sequence belongs to the transferase hexapeptide repeat family. LpxD subfamily. Homotrimer.

The enzyme catalyses a UDP-3-O-[(3R)-3-hydroxyacyl]-alpha-D-glucosamine + a (3R)-hydroxyacyl-[ACP] = a UDP-2-N,3-O-bis[(3R)-3-hydroxyacyl]-alpha-D-glucosamine + holo-[ACP] + H(+). Its pathway is bacterial outer membrane biogenesis; LPS lipid A biosynthesis. Catalyzes the N-acylation of UDP-3-O-acylglucosamine using 3-hydroxyacyl-ACP as the acyl donor. Is involved in the biosynthesis of lipid A, a phosphorylated glycolipid that anchors the lipopolysaccharide to the outer membrane of the cell. The sequence is that of UDP-3-O-acylglucosamine N-acyltransferase from Brucella abortus (strain S19).